We begin with the raw amino-acid sequence, 524 residues long: Serine/threonine-protein kinase PAK 2 (524 aa).

The segment at 1 to 81 (MSDNGELEDK…PEISPPSDFE (81 aa)) is disordered. The residue at position 2 (Ser-2) is an N-acetylserine. Phosphoserine is present on residues Ser-2, Ser-20, Ser-55, and Ser-58. At Thr-60 the chain carries Phosphothreonine. The residue at position 62 (Lys-62) is an N6-acetyllysine. At Ser-64 the chain carries Phosphoserine. A compositionally biased stretch (basic and acidic residues) spans 67–81 (KEKERPEISPPSDFE). Residues 69–112 (KERPEISPPSDFEHTIHVGFDAVTGEFTGMPEQWARLLQTSNIT) form a GTPase-binding region. An autoregulatory region region spans residues 69–137 (KERPEISPPS…KFYDSNTVKQ (69 aa)). A CRIB domain is found at 74 to 87 (ISPPSDFEHTIHVG). Lys-128 carries the post-translational modification N6-acetyllysine. Thr-134 carries the post-translational modification Phosphothreonine. A Phosphotyrosine modification is found at Tyr-139. Residue Ser-141 is modified to Phosphoserine. A Phosphothreonine modification is found at Thr-143. Disordered regions lie at residues 143–164 (TPPE…GTEA) and 169–188 (TEEE…PRPD). Phosphoserine is present on Ser-152. A phosphothreonine mark is found at Thr-154 and Thr-169. The segment covering 169-178 (TEEEDDDEET) has biased composition (acidic residues). The residue at position 197 (Ser-197) is a Phosphoserine. Residue Gly-213 is the site of N-myristoyl glycine; in form PAK-2p34 attachment. Positions 245–251 (PKKKYTR) match the Nuclear localization signal motif. A Protein kinase domain is found at 249–499 (YTRYEKIGQG…SAKELLQHPF (251 aa)). ATP is bound by residues 255–263 (IGQGASGTV) and Lys-278. Arg-367 functions as the Proton acceptor in the catalytic mechanism. Thr-402 is subject to Phosphothreonine; by autocatalysis.

The protein belongs to the protein kinase superfamily. STE Ser/Thr protein kinase family. STE20 subfamily. In terms of assembly, interacts tightly with GTP-bound but not GDP-bound CDC42/p21 and RAC1. Interacts with SH3MD4. Interacts with SCRIB. Interacts with ARHGEF7 and GIT1. PAK-2p34 interacts with ARHGAP10. As to quaternary structure, (Microbial infection) Interacts with and activated by HIV-1 Nef. Post-translationally, full-length PAK2 is autophosphorylated when activated by CDC42/p21. Following cleavage, both peptides, PAK-2p27 and PAK-2p34, become highly autophosphorylated, with PAK-2p27 being phosphorylated on serine and PAK-2p34 on threonine residues, respectively. Autophosphorylation of PAK-2p27 can occur in the absence of any effectors and is dependent on phosphorylation of Thr-402, because PAK-2p27 is acting as an exogenous substrate. During apoptosis proteolytically cleaved by caspase-3 or caspase-3-like proteases to yield active PAK-2p34. In terms of processing, ubiquitinated, leading to its proteasomal degradation. Post-translationally, PAK-2p34 is myristoylated. As to expression, ubiquitously expressed. Higher levels seen in skeletal muscle, ovary, thymus and spleen.

The protein resides in the cytoplasm. Its subcellular location is the nucleus. The protein localises to the perinuclear region. It is found in the membrane. It catalyses the reaction L-seryl-[protein] + ATP = O-phospho-L-seryl-[protein] + ADP + H(+). It carries out the reaction L-threonyl-[protein] + ATP = O-phospho-L-threonyl-[protein] + ADP + H(+). With respect to regulation, activated by binding small G proteins. Binding of GTP-bound CDC42 or RAC1 to the autoregulatory region releases monomers from the autoinhibited dimer, enables phosphorylation of Thr-402 and allows the kinase domain to adopt an active structure. Following caspase cleavage, autophosphorylated PAK-2p34 is constitutively active. Functionally, serine/threonine protein kinase that plays a role in a variety of different signaling pathways including cytoskeleton regulation, cell motility, cell cycle progression, apoptosis or proliferation. Acts as a downstream effector of the small GTPases CDC42 and RAC1. Activation by the binding of active CDC42 and RAC1 results in a conformational change and a subsequent autophosphorylation on several serine and/or threonine residues. Full-length PAK2 stimulates cell survival and cell growth. Phosphorylates MAPK4 and MAPK6 and activates the downstream target MAPKAPK5, a regulator of F-actin polymerization and cell migration. Phosphorylates JUN and plays an important role in EGF-induced cell proliferation. Phosphorylates many other substrates including histone H4 to promote assembly of H3.3 and H4 into nucleosomes, BAD, ribosomal protein S6, or MBP. Phosphorylates CASP7, thereby preventing its activity. Additionally, associates with ARHGEF7 and GIT1 to perform kinase-independent functions such as spindle orientation control during mitosis. On the other hand, apoptotic stimuli such as DNA damage lead to caspase-mediated cleavage of PAK2, generating PAK-2p34, an active p34 fragment that translocates to the nucleus and promotes cellular apoptosis involving the JNK signaling pathway. Caspase-activated PAK2 phosphorylates MKNK1 and reduces cellular translation. The chain is Serine/threonine-protein kinase PAK 2 (PAK2) from Homo sapiens (Human).